A 371-amino-acid chain; its full sequence is Chaperone protein DnaJ (371 aa).

In terms of domain architecture, J spans 5 to 69 (DYYEVLGLSK…QKRAQYDQFG (65 aa)). The segment at 133–215 (GKELNVEIPV…CHGSGKVRKR (83 aa)) adopts a CR-type zinc-finger fold. Zn(2+)-binding residues include cysteine 146, cysteine 149, cysteine 163, cysteine 166, cysteine 189, cysteine 192, cysteine 203, and cysteine 206. CXXCXGXG motif repeat units lie at residues 146 to 153 (CDTCKGSG), 163 to 170 (CKHCSGSG), 189 to 196 (CSHCSGTG), and 203 to 210 (CTTCHGSG).

This sequence belongs to the DnaJ family. Homodimer. Zn(2+) is required as a cofactor.

The protein resides in the cytoplasm. Functionally, participates actively in the response to hyperosmotic and heat shock by preventing the aggregation of stress-denatured proteins and by disaggregating proteins, also in an autonomous, DnaK-independent fashion. Unfolded proteins bind initially to DnaJ; upon interaction with the DnaJ-bound protein, DnaK hydrolyzes its bound ATP, resulting in the formation of a stable complex. GrpE releases ADP from DnaK; ATP binding to DnaK triggers the release of the substrate protein, thus completing the reaction cycle. Several rounds of ATP-dependent interactions between DnaJ, DnaK and GrpE are required for fully efficient folding. Also involved, together with DnaK and GrpE, in the DNA replication of plasmids through activation of initiation proteins. In Bacillus anthracis (strain A0248), this protein is Chaperone protein DnaJ.